The following is a 125-amino-acid chain: MTIFQGRATRKPSGGKLRPNHSKRRYELGREPTLTRLGDRELRKIRSYGGNSKFALLRCDYANVYNPKDKTTRKVKINTVKENSADPHYVQRNIMNRGTVISTELGDARITSRPGQDGVINAVLL.

The disordered stretch occupies residues 1 to 30 (MTIFQGRATRKPSGGKLRPNHSKRRYELGR).

The protein belongs to the eukaryotic ribosomal protein eS8 family. In terms of assembly, part of the 30S ribosomal subunit.

The sequence is that of Small ribosomal subunit protein eS8 from Picrophilus torridus (strain ATCC 700027 / DSM 9790 / JCM 10055 / NBRC 100828 / KAW 2/3).